Reading from the N-terminus, the 370-residue chain is Phosphate acyltransferase (370 aa).

It belongs to the PlsX family. Homodimer. Probably interacts with PlsY.

The protein localises to the cytoplasm. The enzyme catalyses a fatty acyl-[ACP] + phosphate = an acyl phosphate + holo-[ACP]. It participates in lipid metabolism; phospholipid metabolism. In terms of biological role, catalyzes the reversible formation of acyl-phosphate (acyl-PO(4)) from acyl-[acyl-carrier-protein] (acyl-ACP). This enzyme utilizes acyl-ACP as fatty acyl donor, but not acyl-CoA. In Polaromonas naphthalenivorans (strain CJ2), this protein is Phosphate acyltransferase.